Consider the following 94-residue polypeptide: MTKSELIERLATQQSHIPAKTVEDAVKDMLEHMASTLAQGERIEIRGFGSFSLHYRAPRTGRNPKTGDKVELEGKYVPHFKPGKELRDRANIYG.

It belongs to the bacterial histone-like protein family. As to quaternary structure, heterodimer of an alpha and a beta chain.

In terms of biological role, this protein is one of the two subunits of integration host factor, a specific DNA-binding protein that functions in genetic recombination as well as in transcriptional and translational control. The protein is Integration host factor subunit beta of Escherichia coli O127:H6 (strain E2348/69 / EPEC).